The sequence spans 347 residues: Protein pelota homolog (347 aa).

It belongs to the eukaryotic release factor 1 family. Pelota subfamily. Monomer. A divalent metal cation serves as cofactor.

The protein resides in the cytoplasm. Functionally, may function in recognizing stalled ribosomes, interact with stem-loop structures in stalled mRNA molecules, and effect endonucleolytic cleavage of the mRNA. May play a role in the release non-functional ribosomes and degradation of damaged mRNAs. Has endoribonuclease activity. The polypeptide is Protein pelota homolog (Methanococcoides burtonii (strain DSM 6242 / NBRC 107633 / OCM 468 / ACE-M)).